A 408-amino-acid polypeptide reads, in one-letter code: MQSAAAVGLLRPCGATTAAAPLQLRNPSPRGFGVGVGQPLLPPRGLRLSAVAPRAGISARRIGLVPASPEQEDERRRGARDVAVAATAAAAGEAGAEEGGGLAKTLQLGALFGLWYLFNIYFNIYNKQVLKVFPYPINITNVQFAVGTVIALFMWITGILKRPKISGAQLAAILPLAMVHTMGNLFTNMSLGKVAVSFTHTIKAMEPFFSVLLSALFLGEMPTPFVVLSLVPIVGGVALASLTEASFNWAGFWSAMASNVTFQSRNVLSKKLMVKKEESLDNITLFSIITVMSFFLLAPVTLLTEGVKVTPTVLQSAGLNLKQIYTRSLIAAFCFHAYQQVSYMILARVSPVTHSVGNCVKRVVVIVTSVLFFRTPVSPINSLGTGVALAGVFLYSQLKRLKPKPKTA.

A chloroplast-targeting transit peptide spans 1–66 (MQSAAAVGLL…ISARRIGLVP (66 aa)). The next 7 helical transmembrane spans lie at 105–125 (TLQL…FNIY), 139–159 (ITNV…ITGI), 165–185 (ISGA…MGNL), 222–242 (PTPF…LASL), 245–262 (ASFN…NVTF), 283–303 (ITLF…VTLL), and 375–395 (TPVS…VFLY). One can recognise an EamA domain in the interval 124–241 (IYNKQVLKVF…PIVGGVALAS (118 aa)).

It belongs to the TPT transporter family. PPT (TC 2.A.7.9) subfamily.

It localises to the plastid. It is found in the chloroplast membrane. In terms of biological role, phosphoenolpyruvate/phosphate translocator that transports phosphoenolpyruvate (PEP) and dihydroxyacetone phosphate. The protein is Phosphoenolpyruvate/phosphate translocator 1, chloroplastic (PPT1) of Oryza sativa subsp. japonica (Rice).